The chain runs to 125 residues: Large ribosomal subunit protein bL17 (125 aa).

It belongs to the bacterial ribosomal protein bL17 family. As to quaternary structure, part of the 50S ribosomal subunit. Contacts protein L32.

The polypeptide is Large ribosomal subunit protein bL17 (Marinomonas sp. (strain MWYL1)).